Consider the following 238-residue polypeptide: Ribonuclease PH (238 aa).

Phosphate is bound by residues R86 and 124 to 126; that span reads GTR.

It belongs to the RNase PH family. As to quaternary structure, homohexameric ring arranged as a trimer of dimers.

It carries out the reaction tRNA(n+1) + phosphate = tRNA(n) + a ribonucleoside 5'-diphosphate. Phosphorolytic 3'-5' exoribonuclease that plays an important role in tRNA 3'-end maturation. Removes nucleotide residues following the 3'-CCA terminus of tRNAs; can also add nucleotides to the ends of RNA molecules by using nucleoside diphosphates as substrates, but this may not be physiologically important. Probably plays a role in initiation of 16S rRNA degradation (leading to ribosome degradation) during starvation. The sequence is that of Ribonuclease PH from Yersinia enterocolitica serotype O:8 / biotype 1B (strain NCTC 13174 / 8081).